Reading from the N-terminus, the 334-residue chain is Holliday junction branch migration complex subunit RuvB (334 aa).

The segment at 4 to 186 is large ATPase domain (RuvB-L); that stretch reads ADRLIAPENP…FGITQRLEYY (183 aa). Residues Ile-25, Arg-26, Gly-67, Lys-70, Thr-71, Thr-72, 133 to 135, Arg-176, Tyr-186, and Arg-223 each bind ATP; that span reads EDY. Thr-71 contributes to the Mg(2+) binding site. The tract at residues 187-257 is small ATPAse domain (RuvB-S); that stretch reads KVKDLQDIVQ…TADKALNMLD (71 aa). The segment at 260–334 is head domain (RuvB-H); that stretch reads AEGFDYMDRK…RAYLHFGIEK (75 aa). 2 residues coordinate DNA: Arg-315 and Arg-320.

It belongs to the RuvB family. In terms of assembly, homohexamer. Forms an RuvA(8)-RuvB(12)-Holliday junction (HJ) complex. HJ DNA is sandwiched between 2 RuvA tetramers; dsDNA enters through RuvA and exits via RuvB. An RuvB hexamer assembles on each DNA strand where it exits the tetramer. Each RuvB hexamer is contacted by two RuvA subunits (via domain III) on 2 adjacent RuvB subunits; this complex drives branch migration. In the full resolvosome a probable DNA-RuvA(4)-RuvB(12)-RuvC(2) complex forms which resolves the HJ.

Its subcellular location is the cytoplasm. The catalysed reaction is ATP + H2O = ADP + phosphate + H(+). In terms of biological role, the RuvA-RuvB-RuvC complex processes Holliday junction (HJ) DNA during genetic recombination and DNA repair, while the RuvA-RuvB complex plays an important role in the rescue of blocked DNA replication forks via replication fork reversal (RFR). RuvA specifically binds to HJ cruciform DNA, conferring on it an open structure. The RuvB hexamer acts as an ATP-dependent pump, pulling dsDNA into and through the RuvAB complex. RuvB forms 2 homohexamers on either side of HJ DNA bound by 1 or 2 RuvA tetramers; 4 subunits per hexamer contact DNA at a time. Coordinated motions by a converter formed by DNA-disengaged RuvB subunits stimulates ATP hydrolysis and nucleotide exchange. Immobilization of the converter enables RuvB to convert the ATP-contained energy into a lever motion, pulling 2 nucleotides of DNA out of the RuvA tetramer per ATP hydrolyzed, thus driving DNA branch migration. The RuvB motors rotate together with the DNA substrate, which together with the progressing nucleotide cycle form the mechanistic basis for DNA recombination by continuous HJ branch migration. Branch migration allows RuvC to scan DNA until it finds its consensus sequence, where it cleaves and resolves cruciform DNA. The chain is Holliday junction branch migration complex subunit RuvB from Vibrio campbellii (strain ATCC BAA-1116).